The primary structure comprises 405 residues: Glucose-1-phosphate adenylyltransferase 1 (405 aa).

Alpha-D-glucose 1-phosphate contacts are provided by residues Y96, G161, 176-177, and S194; that span reads EK.

Belongs to the bacterial/plant glucose-1-phosphate adenylyltransferase family. In terms of assembly, homotetramer.

The enzyme catalyses alpha-D-glucose 1-phosphate + ATP + H(+) = ADP-alpha-D-glucose + diphosphate. The protein operates within glycan biosynthesis; glycogen biosynthesis. Functionally, involved in the biosynthesis of ADP-glucose, a building block required for the elongation reactions to produce glycogen. Catalyzes the reaction between ATP and alpha-D-glucose 1-phosphate (G1P) to produce pyrophosphate and ADP-Glc. This is Glucose-1-phosphate adenylyltransferase 1 from Vibrio vulnificus (strain YJ016).